A 616-amino-acid chain; its full sequence is RNA-directed RNA polymerase (616 aa).

It catalyses the reaction RNA(n) + a ribonucleoside 5'-triphosphate = RNA(n+1) + diphosphate. RNA-dependent RNA polymerase which replicates the viral genome. The chain is RNA-directed RNA polymerase from White clover cryptic virus 1 (isolate Boccardo/2004) (WCCV-1).